Reading from the N-terminus, the 381-residue chain is Lipid-A-disaccharide synthase (381 aa).

This sequence belongs to the LpxB family.

The enzyme catalyses a lipid X + a UDP-2-N,3-O-bis[(3R)-3-hydroxyacyl]-alpha-D-glucosamine = a lipid A disaccharide + UDP + H(+). It participates in bacterial outer membrane biogenesis; LPS lipid A biosynthesis. In terms of biological role, condensation of UDP-2,3-diacylglucosamine and 2,3-diacylglucosamine-1-phosphate to form lipid A disaccharide, a precursor of lipid A, a phosphorylated glycolipid that anchors the lipopolysaccharide to the outer membrane of the cell. In Psychromonas ingrahamii (strain DSM 17664 / CCUG 51855 / 37), this protein is Lipid-A-disaccharide synthase.